A 119-amino-acid chain; its full sequence is Large ribosomal subunit protein uL18 (119 aa).

The protein belongs to the universal ribosomal protein uL18 family. Part of the 50S ribosomal subunit; part of the 5S rRNA/L5/L18/L25 subcomplex. Contacts the 5S and 23S rRNAs.

In terms of biological role, this is one of the proteins that bind and probably mediate the attachment of the 5S RNA into the large ribosomal subunit, where it forms part of the central protuberance. This Legionella pneumophila (strain Paris) protein is Large ribosomal subunit protein uL18.